Reading from the N-terminus, the 453-residue chain is Glutamyl-tRNA(Gln) amidotransferase subunit A (453 aa).

Active-site charge relay system residues include K53 and S128. Residue S152 is the Acyl-ester intermediate of the active site.

The protein belongs to the amidase family. GatA subfamily. Heterotrimer of A, B and C subunits.

The enzyme catalyses L-glutamyl-tRNA(Gln) + L-glutamine + ATP + H2O = L-glutaminyl-tRNA(Gln) + L-glutamate + ADP + phosphate + H(+). Allows the formation of correctly charged Gln-tRNA(Gln) through the transamidation of misacylated Glu-tRNA(Gln) in organisms which lack glutaminyl-tRNA synthetase. The reaction takes place in the presence of glutamine and ATP through an activated gamma-phospho-Glu-tRNA(Gln). This chain is Glutamyl-tRNA(Gln) amidotransferase subunit A, found in Helicobacter pylori (strain G27).